The chain runs to 359 residues: 3-dehydroquinate synthase (359 aa).

NAD(+) is bound by residues 71-76, 105-109, 129-130, lysine 142, lysine 151, and 169-172; these read DGEQFK, GVIGD, TT, and CLQT. Positions 184, 247, and 264 each coordinate Zn(2+).

The protein belongs to the sugar phosphate cyclases superfamily. Dehydroquinate synthase family. NAD(+) is required as a cofactor. The cofactor is Co(2+). Requires Zn(2+) as cofactor.

It localises to the cytoplasm. The catalysed reaction is 7-phospho-2-dehydro-3-deoxy-D-arabino-heptonate = 3-dehydroquinate + phosphate. It participates in metabolic intermediate biosynthesis; chorismate biosynthesis; chorismate from D-erythrose 4-phosphate and phosphoenolpyruvate: step 2/7. Functionally, catalyzes the conversion of 3-deoxy-D-arabino-heptulosonate 7-phosphate (DAHP) to dehydroquinate (DHQ). The chain is 3-dehydroquinate synthase from Shewanella oneidensis (strain ATCC 700550 / JCM 31522 / CIP 106686 / LMG 19005 / NCIMB 14063 / MR-1).